The chain runs to 167 residues: Translation initiation factor IF-3 (167 aa).

Belongs to the IF-3 family. Monomer.

Its subcellular location is the cytoplasm. In terms of biological role, IF-3 binds to the 30S ribosomal subunit and shifts the equilibrium between 70S ribosomes and their 50S and 30S subunits in favor of the free subunits, thus enhancing the availability of 30S subunits on which protein synthesis initiation begins. The sequence is that of Translation initiation factor IF-3 from Bacillus cereus (strain ATCC 14579 / DSM 31 / CCUG 7414 / JCM 2152 / NBRC 15305 / NCIMB 9373 / NCTC 2599 / NRRL B-3711).